Reading from the N-terminus, the 585-residue chain is Glycerol-3-phosphate dehydrogenase 2 (585 aa).

Residue 37-65 (DVVVIGGGVVGSGCALDAATRGLKVALVE) participates in FAD binding.

It belongs to the FAD-dependent glycerol-3-phosphate dehydrogenase family. FAD serves as cofactor.

Its subcellular location is the cytoplasm. It catalyses the reaction a quinone + sn-glycerol 3-phosphate = dihydroxyacetone phosphate + a quinol. The sequence is that of Glycerol-3-phosphate dehydrogenase 2 (glpD2) from Mycobacterium bovis (strain ATCC BAA-935 / AF2122/97).